A 319-amino-acid polypeptide reads, in one-letter code: Acetyl-coenzyme A carboxylase carboxyl transferase subunit alpha (319 aa).

One can recognise a CoA carboxyltransferase C-terminal domain in the interval 35–296 (NIDEEVHRLR…KAQLLADLAD (262 aa)).

It belongs to the AccA family. In terms of assembly, acetyl-CoA carboxylase is a heterohexamer composed of biotin carboxyl carrier protein (AccB), biotin carboxylase (AccC) and two subunits each of ACCase subunit alpha (AccA) and ACCase subunit beta (AccD).

The protein resides in the cytoplasm. The catalysed reaction is N(6)-carboxybiotinyl-L-lysyl-[protein] + acetyl-CoA = N(6)-biotinyl-L-lysyl-[protein] + malonyl-CoA. It functions in the pathway lipid metabolism; malonyl-CoA biosynthesis; malonyl-CoA from acetyl-CoA: step 1/1. Its function is as follows. Component of the acetyl coenzyme A carboxylase (ACC) complex. First, biotin carboxylase catalyzes the carboxylation of biotin on its carrier protein (BCCP) and then the CO(2) group is transferred by the carboxyltransferase to acetyl-CoA to form malonyl-CoA. In Escherichia coli O139:H28 (strain E24377A / ETEC), this protein is Acetyl-coenzyme A carboxylase carboxyl transferase subunit alpha.